Consider the following 280-residue polypeptide: Polyamine aminopropyltransferase (280 aa).

In terms of domain architecture, PABS spans 2–235 (GGWIDEEHRG…GWWSWTFAAV (234 aa)). Q29 is a binding site for S-methyl-5'-thioadenosine. Residues H60 and D84 each coordinate spermidine. Residues E104 and 136-137 (DG) contribute to the S-methyl-5'-thioadenosine site. The active-site Proton acceptor is D155. P162 serves as a coordination point for S-methyl-5'-thioadenosine.

Belongs to the spermidine/spermine synthase family. In terms of assembly, homodimer or homotetramer.

The protein resides in the cytoplasm. The enzyme catalyses S-adenosyl 3-(methylsulfanyl)propylamine + putrescine = S-methyl-5'-thioadenosine + spermidine + H(+). It participates in amine and polyamine biosynthesis; spermidine biosynthesis; spermidine from putrescine: step 1/1. In terms of biological role, catalyzes the irreversible transfer of a propylamine group from the amino donor S-adenosylmethioninamine (decarboxy-AdoMet) to putrescine (1,4-diaminobutane) to yield spermidine. This is Polyamine aminopropyltransferase from Parasynechococcus marenigrum (strain WH8102).